Here is a 506-residue protein sequence, read N- to C-terminus: MASGDLYEVERIVDKRKNKKGKWEYLIRWKGYGSTEDTWEPEHHLLHCEEFIDEFNGLHMSKDKRIKSGKQSSTSKLLRDSRGPSVEKLSHRPSDPGKSKGTSHKRKRINPPLAKPKKGYSGKPSSGGDRATKTVSYRTTPSGLQIMPLKKSQNGMENGDAGSEKDERHFGNGSHQPGLDLNDHVGEQDMGECDVNHATLAENGLGSALTNGGLNLHSPVKRKLEAEKDYVFDKRLRYSVRQNESNCRFRDIVVRKEEGFTHILLSSQTSDNNALTPEIMKEVRRALCNAATDDSKLLLLSAVGSVFCSGLDYSYLIGRLSSDRRKESTRIAEAIRDFVKAFIQFKKPIVVAINGPALGLGASILPLCDIVWASEKAWFQTPYATIRLTPAGCSSYTFPQILGVALANEMLFCGRKLTAQEACSRGLVSQVFWPTTFSQEVMLRVKEMASCSAVVLEESKCLVRSFLKSVLEDVNEKECLMLKQLWSSSKGLDSLFSYLQDKIYEV.

The Chromo domain maps to Tyr7–Lys67. Residues Lys64 to Pro177 form a disordered region. Positions Lys88 to Lys98 are enriched in basic and acidic residues. Over residues Gly101–Tyr120 the composition is skewed to basic residues. A compositionally biased stretch (polar residues) spans Lys133–Gly143.

In terms of assembly, interacts (via chromo domain) with histone H3K9me3. As to expression, ubiquitously expressed.

It localises to the nucleus. The polypeptide is Chromodomain Y-like protein 2 (CDYL2) (Homo sapiens (Human)).